A 222-amino-acid chain; its full sequence is uncharacterized protein (222 aa).

The next 2 membrane-spanning stretches (helical) occupy residues Ile-22 to Ile-42 and Ala-189 to Val-209.

The protein localises to the cell membrane. This is an uncharacterized protein from Escherichia coli (strain K12).